Here is a 1760-residue protein sequence, read N- to C-terminus: Chitin synthase A (1760 aa).

Asn157 carries N-linked (GlcNAc...) asparagine glycosylation. Transmembrane regions (helical) follow at residues 729–749 (IWTG…LRFV) and 765–785 (LVLV…IIAF). 2 N-linked (GlcNAc...) asparagine glycosylation sites follow: Asn876 and Asn996. The chain crosses the membrane as a helical span at residues 1027 to 1047 (ILLAFTCLICAVILVKFLAAL). The N-linked (GlcNAc...) asparagine glycan is linked to Asn1392. A run of 3 helical transmembrane segments spans residues 1417-1437 (FVVL…VYLG), 1449-1469 (IPII…IIFI), and 1477-1497 (IGWM…LPMY). 3 N-linked (GlcNAc...) asparagine glycosylation sites follow: Asn1557, Asn1645, and Asn1650. Residues 1670–1691 (DNLLGVPRPNSRSPVGGYTSRP) form a disordered region. Positions 1702–1758 (GPDEMAITDAIRSCLAEVDLDTVTKKQVRALVEQRLQATLTGDKRAFLDRQIDQELA) constitute a DEK-C domain.

This sequence belongs to the chitin synthase family. Class V subfamily.

It is found in the cell membrane. It catalyses the reaction [(1-&gt;4)-N-acetyl-beta-D-glucosaminyl](n) + UDP-N-acetyl-alpha-D-glucosamine = [(1-&gt;4)-N-acetyl-beta-D-glucosaminyl](n+1) + UDP + H(+). In terms of biological role, polymerizes chitin, a structural polymer of the cell wall and septum, by transferring the sugar moiety of UDP-GlcNAc to the non-reducing end of the growing chitin polymer. Plays an important role in cell-wall formation during both hyphal growth and conidiation. This Aspergillus oryzae (strain ATCC 42149 / RIB 40) (Yellow koji mold) protein is Chitin synthase A.